Here is a 497-residue protein sequence, read N- to C-terminus: Vacuolar-processing enzyme beta-isozyme 1 (497 aa).

The first 23 residues, 1-23, serve as a signal peptide directing secretion; sequence MAARCWVWGFVVALLAVAAAADG. An N-linked (GlcNAc...) asparagine glycan is attached at N153. H180 is a catalytic residue. The active-site Nucleophile is C222. C255 and C269 are disulfide-bonded. N340 carries N-linked (GlcNAc...) asparagine glycosylation. Intrachain disulfides connect C432-C462 and C444-C479.

The protein belongs to the peptidase C13 family. Auto-catalytic activation.

It is found in the protein storage vacuole. It catalyses the reaction Hydrolysis of proteins and small molecule substrates at -Asn-|-Xaa- bonds.. Its function is as follows. Asparagine-specific endopeptidase that may be involved in processing of proteins targeted to vacuoles. Cysteine protease required for post-translational proteolysis of seed storage proteins in the protein storage vacuole (PSV) of developing seeds, by processing of proglutelin precursor to mature glutelin subunits, thus contributing to the formation of protein crystalline structures in PSV. The chain is Vacuolar-processing enzyme beta-isozyme 1 from Oryza sativa subsp. indica (Rice).